Here is a 434-residue protein sequence, read N- to C-terminus: Zinc finger and BTB domain-containing protein 8A (434 aa).

Positions 24 to 92 constitute a BTB domain; the sequence is CDCSILVEGK…VYSGKLSLTG (69 aa). The tract at residues 134–238 is disordered; that stretch reads SLSDKDTGSN…SGNHVSQSEE (105 aa). 2 positions are modified to phosphoserine: Ser161 and Ser167. Residues Lys172, Lys176, and Lys193 each participate in a glycyl lysine isopeptide (Lys-Gly) (interchain with G-Cter in SUMO2) cross-link. Basic and acidic residues predominate over residues 192–202; sequence AKHEQRKEPSK. Over residues 226-238 the composition is skewed to polar residues; the sequence is QTDSGNHVSQSEE. C2H2-type zinc fingers lie at residues 275–297 and 303–326; these read FKCPFCTHVVKRKADLKRHLRCH and YPCQACGKRFSRLDHLSSHFRTIH. Residue Lys430 forms a Glycyl lysine isopeptide (Lys-Gly) (interchain with G-Cter in SUMO2) linkage.

Its subcellular location is the nucleus. May be involved in transcriptional regulation. The polypeptide is Zinc finger and BTB domain-containing protein 8A (Zbtb8a) (Mus musculus (Mouse)).